An 804-amino-acid chain; its full sequence is Probable exo-1,4-beta-xylosidase xlnD (804 aa).

Residues 1–26 (MAHSMSRPVAATAAALLALALPQALA) form the signal peptide. N-linked (GlcNAc...) asparagine glycans are attached at residues Asn29, Asn124, Asn148, Asn242, and Asn251. Asp315 is a catalytic residue. Residues Asn357, Asn390, Asn413, Asn444, Asn455, Asn573, Asn576, Asn665, Asn696, and Asn718 are each glycosylated (N-linked (GlcNAc...) asparagine).

The protein belongs to the glycosyl hydrolase 3 family.

The protein localises to the secreted. It catalyses the reaction Hydrolysis of (1-&gt;4)-beta-D-xylans, to remove successive D-xylose residues from the non-reducing termini.. It participates in glycan degradation; xylan degradation. Its function is as follows. Xylan 1,4-beta-xylosidase involved in the hydrolysis of xylan, a major structural heterogeneous polysaccharide found in plant biomass representing the second most abundant polysaccharide in the biosphere, after cellulose. This Aspergillus niger (strain ATCC MYA-4892 / CBS 513.88 / FGSC A1513) protein is Probable exo-1,4-beta-xylosidase xlnD (xlnD).